Reading from the N-terminus, the 99-residue chain is A-type ATP synthase subunit F (99 aa).

This sequence belongs to the V-ATPase F subunit family. In terms of assembly, has multiple subunits with at least A(3), B(3), C, D, E, F, H, I and proteolipid K(x).

The protein resides in the cell membrane. In terms of biological role, component of the A-type ATP synthase that produces ATP from ADP in the presence of a proton gradient across the membrane. The sequence is that of A-type ATP synthase subunit F from Methanocella arvoryzae (strain DSM 22066 / NBRC 105507 / MRE50).